The primary structure comprises 218 residues: Probable GTP-binding protein EngB (218 aa).

Residues 21–192 (NAPQIALAGR…WQELHRLAFP (172 aa)) form the EngB-type G domain. Residues 29–36 (GRSNVGKS), 56–60 (GKTRS), 75–78 (DLPG), 142–145 (TKAD), and 171–173 (FSS) each bind GTP. The Mg(2+) site is built by serine 36 and threonine 58. The tract at residues 194–218 (MAFDTPSDGAPEPADEPEAASERAE) is disordered.

This sequence belongs to the TRAFAC class TrmE-Era-EngA-EngB-Septin-like GTPase superfamily. EngB GTPase family. It depends on Mg(2+) as a cofactor.

In terms of biological role, necessary for normal cell division and for the maintenance of normal septation. The polypeptide is Probable GTP-binding protein EngB (Oleidesulfovibrio alaskensis (strain ATCC BAA-1058 / DSM 17464 / G20) (Desulfovibrio alaskensis)).